The primary structure comprises 1083 residues: Voltage-gated inwardly rectifying potassium channel KCNH3 (1083 aa).

Residues 1–228 lie on the Cytoplasmic side of the membrane; it reads MPAMRGLLAP…HCGALRATWD (228 aa). Residues 18–90 enclose the PAS domain; it reads IATRFDGTHS…QQIRKALDEH (73 aa). The 53-residue stretch at 93 to 145 folds into the PAC domain; it reads FKAELILYRKSGLPFWCLLDVIPIKNEKGEVALFLVSHKDISETKNRGGPDRW. Residues 137–150 show a composition bias toward basic and acidic residues; sequence KNRGGPDRWKETGG. Residues 137-157 are disordered; the sequence is KNRGGPDRWKETGGGRRRYGR. Residues 229–249 traverse the membrane as a helical segment; the sequence is GFILLATLYVAVTVPYSVCVS. At 250–259 the chain is on the extracellular side; the sequence is TAREPSAARG. A helical transmembrane segment spans residues 260–280; that stretch reads PPSVCDLAVEVLFILDIVLNF. Residues 281–302 lie on the Cytoplasmic side of the membrane; the sequence is RTTFVSKSGQVVFAPKSICLHY. A helical transmembrane segment spans residues 303–323; sequence VTTWFLLDVIAALPFDLLHAF. Residues 324–331 are Extracellular-facing; sequence KVNVYFGA. Residues 332-352 form a helical; Voltage-sensor membrane-spanning segment; the sequence is HLLKTVRLLRLLRLLPRLDRY. Residues 353–361 lie on the Cytoplasmic side of the membrane; that stretch reads SQYSAVVLT. The helical transmembrane segment at 362 to 382 threads the bilayer; it reads LLMAVFALLAHWVACVWFYIG. At 383–453 the chain is on the extracellular side; that stretch reads QREIESSESE…GGPSLRSAYI (71 aa). Asn-421, Asn-428, and Asn-436 each carry an N-linked (GlcNAc...) asparagine glycan. The pore-forming intramembrane region spans 454–474; sequence TSLYFALSSLTSVGFGNVSAN. Positions 465–470 match the Selectivity filter motif; that stretch reads SVGFGN. Residues 475 to 479 lie on the Extracellular side of the membrane; that stretch reads TDTEK. The chain crosses the membrane as a helical span at residues 480-500; the sequence is IFSICTMLIGALMHAVVFGNV. The Cytoplasmic portion of the chain corresponds to 501–1083; that stretch reads TAIIQRMYAR…QWTQEEGTGV (583 aa). 582 to 697 lines the a nucleoside 3',5'-cyclic phosphate pocket; it reads LFEAASRGCL…FAPRFSRGLR (116 aa). Disordered regions lie at residues 729 to 810, 832 to 873, and 972 to 1055; these read EEKE…LRLP, CGSD…SEAR, and MAPW…ALPW. The segment covering 773–785 has biased composition (basic residues); it reads TAPRPRLGGRGRP. A compositionally biased stretch (low complexity) spans 844-861; it reads GQSGPECSSSPSPGPESG.

It belongs to the potassium channel family. H (Eag) (TC 1.A.1.20) subfamily. Kv12.2/KCNH3 sub-subfamily. The potassium channel is probably composed of a homo- or heterotetrameric complex of pore-forming alpha subunits that can associate with modulating beta subunits. Interacts with KCNE1 and KCNE3; these interactions regulate KCNH3 trafficking to the plasma membrane and its subsequent voltage-gated potassium channel activity. In terms of processing, N-glycosylated. N-glycosylation mediates traffick to the cell membrane but is not necessary for voltage-gated potassium channel activity. Detected only in brain, in particular in the telencephalon. Detected in the cerebral cortex, occipital pole, frontal and temporal lobe, putamen, amygdala, hippocampus and caudate nucleus.

It is found in the cell membrane. The catalysed reaction is K(+)(in) = K(+)(out). Pore-forming (alpha) subunit of a voltage-gated inwardly rectifying potassium channel. Charactherized by a fast rate of activation during depolarization followed by a rapid inactivation at much more depolarized value causing inward rectification due to a C-type inactivation mechanism. Exhibits a rapid recovery from inactivation. The protein is Voltage-gated inwardly rectifying potassium channel KCNH3 of Homo sapiens (Human).